A 467-amino-acid polypeptide reads, in one-letter code: Fumarate hydratase class II (467 aa).

Substrate is bound by residues 98–100 (SGT), arginine 126, 129–132 (HPND), 139–141 (SSN), and threonine 187. Histidine 188 serves as the catalytic Proton donor/acceptor. Residue serine 318 is part of the active site. Substrate-binding positions include serine 319 and 324-326 (KVN).

This sequence belongs to the class-II fumarase/aspartase family. Fumarase subfamily. As to quaternary structure, homotetramer.

The protein resides in the cytoplasm. The enzyme catalyses (S)-malate = fumarate + H2O. It participates in carbohydrate metabolism; tricarboxylic acid cycle; (S)-malate from fumarate: step 1/1. Functionally, involved in the TCA cycle. Catalyzes the stereospecific interconversion of fumarate to L-malate. The sequence is that of Fumarate hydratase class II from Salmonella typhimurium (strain LT2 / SGSC1412 / ATCC 700720).